A 374-amino-acid polypeptide reads, in one-letter code: Multicilin (374 aa).

Residues 164–212 adopt a coiled-coil conformation; the sequence is EQYWRDVADHNQKALGDALVENNQLQVSLTEKQEEIVSLKEKNIQLNEL. The segment at 230-260 is disordered; sequence RTKQNSGATQGRLPVKRSLEDFYPQSNEPDS. A TIRT domain region spans residues 330–374; it reads TDLEDVSFRTSIKEHSTIRTLAFPQGNAFTIRTSGGGYKFRWVPN.

The protein belongs to the geminin family. In terms of assembly, component of the EDM complex, at least composed of e2f4, e2f5, mcidas and tfdp1. As to expression, expressed in multiciliate differentiating cells. Expression is lost by stage 26, when multiciliate cells in the skin are fully differentiated, but is then detected in the developing nephrostomes of the kidneys where multiciliate cells form at later stages.

Its subcellular location is the nucleus. Its function is as follows. Transcription regulator specifically required for multiciliate cell differentiation. Acts in a multiprotein complex containing E2F4 and E2F5 that binds and activates genes required for centriole biogenesis. Activates genes required for centriole assembly (plk4, cep152) and genes specifically required for motile cilia formation (foxj1). Also promotes the deuterosome pathway of centriole biogenesis by activating expression of ccdc67/deup1, but not its paralog cep63. This chain is Multicilin (mcidas), found in Xenopus laevis (African clawed frog).